We begin with the raw amino-acid sequence, 451 residues long: Secreted RxLR effector protein 111 (451 aa).

The N-terminal stretch at 1–19 is a signal peptide; the sequence is MRGTLATALLLVASCRIAA. The RxLR-dEER motif lies at 48–69; that stretch reads RFLRDNREQRVALALTAANESR. N-linked (GlcNAc...) asparagine glycosylation occurs at Asn-66. Composition is skewed to polar residues over residues 175–184 and 413–426; these read RKTLSKTQFK and SPAS…QRTG. Disordered regions lie at residues 175 to 194 and 404 to 451; these read RKTL…STKR and IPLQ…NKHA. Positions 437–451 are enriched in basic and acidic residues; sequence PERDSFRHIESNKHA.

It belongs to the RxLR effector family.

The protein resides in the secreted. It is found in the host nucleus. In terms of biological role, secreted effector that acts as an elicitor that induces cell death in host plant cells. In Plasmopara viticola (Downy mildew of grapevine), this protein is Secreted RxLR effector protein 111.